The following is a 345-amino-acid chain: S-adenosylmethionine:tRNA ribosyltransferase-isomerase (345 aa).

This sequence belongs to the QueA family. As to quaternary structure, monomer.

The protein resides in the cytoplasm. The catalysed reaction is 7-aminomethyl-7-carbaguanosine(34) in tRNA + S-adenosyl-L-methionine = epoxyqueuosine(34) in tRNA + adenine + L-methionine + 2 H(+). The protein operates within tRNA modification; tRNA-queuosine biosynthesis. In terms of biological role, transfers and isomerizes the ribose moiety from AdoMet to the 7-aminomethyl group of 7-deazaguanine (preQ1-tRNA) to give epoxyqueuosine (oQ-tRNA). In Shewanella amazonensis (strain ATCC BAA-1098 / SB2B), this protein is S-adenosylmethionine:tRNA ribosyltransferase-isomerase.